The following is a 184-amino-acid chain: UPS-like protein C36.10 (184 aa).

Residues 1–172 form the PRELI/MSF1 domain; the sequence is MKIFESCHLF…VLEKINMSVF (172 aa).

Belongs to the slowmo family.

It localises to the cytoplasm. Its subcellular location is the mitochondrion inner membrane. It is found in the mitochondrion intermembrane space. Functionally, required for mitochondrial morphology. May control phospholipid metabolism in the mitochondrial intermembrane space. This chain is UPS-like protein C36.10, found in Schizosaccharomyces pombe (strain 972 / ATCC 24843) (Fission yeast).